Reading from the N-terminus, the 152-residue chain is Small ribosomal subunit protein uS15 (152 aa).

Residues 1 to 11 (MAKMHTKRKGK) are compositionally biased toward basic residues. Residues 1–23 (MAKMHTKRKGKSSSTRPIRTDPP) form a disordered region.

It belongs to the universal ribosomal protein uS15 family. As to quaternary structure, part of the 30S ribosomal subunit.

The protein is Small ribosomal subunit protein uS15 of Methanosarcina acetivorans (strain ATCC 35395 / DSM 2834 / JCM 12185 / C2A).